The chain runs to 514 residues: Histidine ammonia-lyase (514 aa).

A cross-link (5-imidazolinone (Ala-Gly)) is located at residues A143–G145. S144 is modified (2,3-didehydroalanine (Ser)).

This sequence belongs to the PAL/histidase family. In terms of processing, contains an active site 4-methylidene-imidazol-5-one (MIO), which is formed autocatalytically by cyclization and dehydration of residues Ala-Ser-Gly.

It localises to the cytoplasm. It catalyses the reaction L-histidine = trans-urocanate + NH4(+). Its pathway is amino-acid degradation; L-histidine degradation into L-glutamate; N-formimidoyl-L-glutamate from L-histidine: step 1/3. The protein is Histidine ammonia-lyase of Photorhabdus laumondii subsp. laumondii (strain DSM 15139 / CIP 105565 / TT01) (Photorhabdus luminescens subsp. laumondii).